We begin with the raw amino-acid sequence, 88 residues long: Putative membrane protein insertion efficiency factor (88 aa).

The protein belongs to the UPF0161 family.

Its subcellular location is the cell membrane. Its function is as follows. Could be involved in insertion of integral membrane proteins into the membrane. The protein is Putative membrane protein insertion efficiency factor (yrcB) of Lactococcus lactis subsp. lactis (strain IL1403) (Streptococcus lactis).